The primary structure comprises 411 residues: Acetylornithine aminotransferase (411 aa).

Pyridoxal 5'-phosphate contacts are provided by residues 107 to 108 (GT) and F141. Residue R144 participates in N(2)-acetyl-L-ornithine binding. A pyridoxal 5'-phosphate-binding site is contributed by 227–230 (DEIQ). The residue at position 256 (K256) is an N6-(pyridoxal phosphate)lysine. Residue T284 coordinates N(2)-acetyl-L-ornithine. T285 contacts pyridoxal 5'-phosphate.

Belongs to the class-III pyridoxal-phosphate-dependent aminotransferase family. ArgD subfamily. Homodimer. Requires pyridoxal 5'-phosphate as cofactor.

It is found in the cytoplasm. It catalyses the reaction N(2)-acetyl-L-ornithine + 2-oxoglutarate = N-acetyl-L-glutamate 5-semialdehyde + L-glutamate. The protein operates within amino-acid biosynthesis; L-arginine biosynthesis; N(2)-acetyl-L-ornithine from L-glutamate: step 4/4. The polypeptide is Acetylornithine aminotransferase (Xylella fastidiosa (strain 9a5c)).